We begin with the raw amino-acid sequence, 643 residues long: 1-deoxy-D-xylulose-5-phosphate synthase (643 aa).

Residues H78 and 119 to 121 each bind thiamine diphosphate; that span reads AHS. D150 serves as a coordination point for Mg(2+). Thiamine diphosphate contacts are provided by residues 151–152, N179, Y288, and E370; that span reads GS. Residue N179 participates in Mg(2+) binding.

This sequence belongs to the transketolase family. DXPS subfamily. In terms of assembly, homodimer. The cofactor is Mg(2+). Thiamine diphosphate is required as a cofactor.

It catalyses the reaction D-glyceraldehyde 3-phosphate + pyruvate + H(+) = 1-deoxy-D-xylulose 5-phosphate + CO2. It participates in metabolic intermediate biosynthesis; 1-deoxy-D-xylulose 5-phosphate biosynthesis; 1-deoxy-D-xylulose 5-phosphate from D-glyceraldehyde 3-phosphate and pyruvate: step 1/1. Its function is as follows. Catalyzes the acyloin condensation reaction between C atoms 2 and 3 of pyruvate and glyceraldehyde 3-phosphate to yield 1-deoxy-D-xylulose-5-phosphate (DXP). This Brucella suis (strain ATCC 23445 / NCTC 10510) protein is 1-deoxy-D-xylulose-5-phosphate synthase.